The primary structure comprises 597 residues: Indole-3-acetic acid-amido synthetase GH3.4 (597 aa).

This sequence belongs to the IAA-amido conjugating enzyme family.

Its function is as follows. Catalyzes the synthesis of indole-3-acetic acid (IAA)-amino acid conjugates, providing a mechanism for the plant to cope with the presence of excess auxin. Strongly reactive with Glu, Gln, Trp, Asp, Ala, Leu, Phe, Gly, Tyr, Met, Ile and Val. Little or no product formation with His, Ser, Thr, Arg, Lys, or Cys. Also active on pyruvic and butyric acid analogs of IAA, PAA and the synthetic auxin naphthaleneacetic acid (NAA). The two chlorinated synthetic auxin herbicides 2,4-D and 3,6-dichloro-o-anisic acid (dicamba) cannot be used as substrates. This chain is Indole-3-acetic acid-amido synthetase GH3.4 (GH3.4), found in Arabidopsis thaliana (Mouse-ear cress).